Reading from the N-terminus, the 367-residue chain is Dihydroxyacetone phosphate transaminase Cj1437c (367 aa).

At Lys-219 the chain carries N6-(pyridoxal phosphate)lysine.

It belongs to the class-II pyridoxal-phosphate-dependent aminotransferase family. Requires pyridoxal 5'-phosphate as cofactor.

It catalyses the reaction dihydroxyacetone phosphate + L-glutamate = (S)-serinol phosphate + 2-oxoglutarate. It participates in capsule biogenesis; capsule polysaccharide biosynthesis. In terms of biological role, pyridoxal phosphate (PLP)-dependent transaminase involved in the biosynthesis of amidated D-glucuronic acid structures found on the capsular polysaccharide (CPS) of C.jejuni. Catalyzes the transamination of dihydroxyacetone phosphate (DHAP) to (S)-serinol phosphate in the presence of L-glutamate. Less active with L-aspartate. No activity with dihydroxyacetone or L-alanine. This chain is Dihydroxyacetone phosphate transaminase Cj1437c, found in Campylobacter jejuni subsp. jejuni serotype O:2 (strain ATCC 700819 / NCTC 11168).